Consider the following 342-residue polypeptide: S-adenosyl-L-methionine-dependent tRNA 4-demethylwyosine synthase (342 aa).

[2Fe-2S] cluster-binding residues include cysteine 45, cysteine 58, and cysteine 71. In terms of domain architecture, Radical SAM core spans tyrosine 64–glutamate 312. Positions 81, 85, and 88 each coordinate [4Fe-4S] cluster.

The protein belongs to the TYW1 family. Monomer. Requires [2Fe-2S] cluster as cofactor. [4Fe-4S] cluster serves as cofactor.

Its subcellular location is the cytoplasm. It catalyses the reaction N(1)-methylguanosine(37) in tRNA(Phe) + pyruvate + S-adenosyl-L-methionine = 4-demethylwyosine(37) in tRNA(Phe) + 5'-deoxyadenosine + L-methionine + CO2 + H2O. Its function is as follows. Component of the wyosine derivatives biosynthesis pathway that catalyzes the condensation of N-methylguanine with 2 carbon atoms from pyruvate to form the tricyclic 4-demethylwyosine (imG-14) on guanosine-37 of tRNA(Phe). The protein is S-adenosyl-L-methionine-dependent tRNA 4-demethylwyosine synthase of Pyrococcus horikoshii (strain ATCC 700860 / DSM 12428 / JCM 9974 / NBRC 100139 / OT-3).